Reading from the N-terminus, the 8886-residue chain is Obscurin (8886 aa).

Ig-like domains follow at residues 9-99 (PRFL…LRVD), 109-201 (PHFL…LVVD), 234-320 (PPSP…QTYS), and 329-415 (PTVP…AELS). An intrachain disulfide couples Cys-30 to Cys-81. The disordered stretch occupies residues 135 to 165 (SPQPAVSWSKDGRRLGPPDAPHVRVEEHGES). Positions 144 to 164 (KDGRRLGPPDAPHVRVEEHGE) are enriched in basic and acidic residues. 2 cysteine pairs are disulfide-bonded: Cys-257–Cys-309 and Cys-352–Cys-402. Position 393 is a phosphoserine (Ser-393). Residues 513 to 610 (PPADPVVKAK…FPGTMHLVPM (98 aa)) enclose the Fibronectin type-III 1 domain. Ig-like domains follow at residues 702 to 793 (PSSK…QDIT), 859 to 951 (PKLV…VAEP), 951 to 1043 (PKLV…VAEP), 1043 to 1135 (PKMV…VTEP), 1135 to 1227 (PKLV…VAEP), 1227 to 1319 (PKLV…VTEP), 1319 to 1407 (PKLV…FRLD), 1411 to 1503 (PKLV…VAEP), 1503 to 1595 (PKLV…VAEP), 1595 to 1687 (PKLA…VAEP), 1687 to 1779 (PKLA…VAEP), 1779 to 1871 (PKLA…VAEP), 1871 to 1963 (PKLM…VAEP), 1963 to 2051 (PKLV…FRLD), 2055 to 2147 (TRLM…VAEA), 2152 to 2241 (PERP…EEVA), 2242 to 2325 (AKFS…ARLT), 2329 to 2415 (PRVV…AALR), 2420 to 2504 (PVLF…AKLN), 2598 to 2681 (PVSF…ASLR), 2721 to 2812 (PVTL…QSIT), 2900 to 2984 (PVVL…AEVT), 3078 to 3162 (PVVF…SKVS), 3258 to 3342 (PVDI…AKLC), 3348 to 3431 (NRFT…ARLL), 3527 to 3610 (PSIF…SSIV), 3616 to 3700 (PVRF…ATLT), 3785 to 3876 (ATLT…ATLT), 3881 to 3964 (PAKF…ATLT), 4042 to 4125 (PTKF…ATLS), 4130 to 4213 (PSRF…ATLS), 4219 to 4301 (PRFI…ATLN), 4307 to 4389 (PRFI…AVLT), 4395 to 4477 (PKFT…ATLS), 4483 to 4565 (PRFI…ATLS), 4571 to 4653 (PRFI…ATLS), 4659 to 4741 (PRFI…ATLS), 4746 to 4829 (PAKF…ATLS), 4833 to 4916 (PQVV…TSAT), 4923 to 5007 (PVRF…ARLS), 5013 to 5105 (PKFK…PEVT), 5378 to 5464 (LEVL…ARLS), and 5557 to 5659 (PQMV…TFNV). Cystine bridges form between Cys-885–Cys-935, Cys-977–Cys-1027, Cys-1069–Cys-1119, Cys-1161–Cys-1211, Cys-1253–Cys-1303, Cys-1345–Cys-1395, Cys-1437–Cys-1487, Cys-1529–Cys-1579, Cys-1621–Cys-1671, Cys-1713–Cys-1763, Cys-1805–Cys-1855, Cys-1897–Cys-1947, Cys-1989–Cys-2039, and Cys-2081–Cys-2131. Cys-2263 and Cys-2313 are oxidised to a cystine. Intrachain disulfides connect Cys-2620/Cys-2669, Cys-2743/Cys-2793, Cys-2922/Cys-2972, Cys-3100/Cys-3150, Cys-3280/Cys-3330, Cys-3369/Cys-3419, Cys-3549/Cys-3599, and Cys-3638/Cys-3688. Ser-3321 is modified (phosphoserine). The residue at position 3802 (Ser-3802) is a Phosphoserine. 14 disulfides stabilise this stretch: Cys-3815/Cys-3864, Cys-3903/Cys-3952, Cys-4064/Cys-4113, Cys-4152/Cys-4201, Cys-4240/Cys-4289, Cys-4328/Cys-4377, Cys-4416/Cys-4465, Cys-4504/Cys-4553, Cys-4592/Cys-4641, Cys-4680/Cys-4729, Cys-4768/Cys-4817, Cys-4856/Cys-4906, Cys-4945/Cys-4995, and Cys-5034/Cys-5086. The residue at position 4960 (Ser-4960) is a Phosphoserine. Residues 5471–5569 (PPEDAEVVGR…VKIAPAPAPA (99 aa)) enclose the Fibronectin type-III 2 domain. A disulfide bridge links Cys-5590 with Cys-5643. Position 5699 is a phosphoserine (Ser-5699). A disordered region spans residues 5700–5736 (REPTLDSISELPEEDSRVQHLRQEAEETAPDLSEGYS). Residue Thr-5703 is modified to Phosphothreonine. Ser-5706 is modified (phosphoserine). Residues 5713 to 5724 (EDSRVQHLRQEA) show a composition bias toward basic and acidic residues. Thr-5737 carries the phosphothreonine modification. Position 5754 is a phosphoserine (Ser-5754). The IQ domain occupies 5821 to 5850 (LDKAAVKIQAAFKGYKVRKEMKQQEGPVFS). An Ig-like 48 domain is found at 5847 to 5930 (PVFSRTFGDT…QVSTKSGRVS (84 aa)). The cysteines at positions 5868 and 5920 are disulfide-linked. Residues 5977–5996 (EEELFLSADEGPGEPEEPAD) form a disordered region. 3 Ig-like domains span residues 6077–6166 (PVFL…AELR), 6209–6298 (PQVL…ARLL), and 6320–6416 (PRIL…LHIS). Cys-6098 and Cys-6150 form a disulfide bridge. The tract at residues 6504-6546 (KLQVPGGDSDEETKTPSASPRHGRSRPSSSVQESSSESEDGDS) is disordered. The residue at position 6512 (Ser-6512) is a Phosphoserine. Phosphothreonine is present on Thr-6518. A compositionally biased stretch (low complexity) spans 6519–6538 (PSASPRHGRSRPSSSVQESS). 2 positions are modified to phosphoserine: Ser-6520 and Ser-6522. The region spanning 6549 to 6616 (EIFDIYVVTA…SPAYLDKRLK (68 aa)) is the SH3 domain. The DH domain maps to 6642 to 6826 (RLSSVIQELL…SALPQRAENK (185 aa)). In terms of domain architecture, PH spans 6844 to 6953 (EPIRQGHFIV…WVKEICGIQQ (110 aa)). An a 1,2-diacyl-sn-glycero-3-phospho-(1D-myo-inositol-4,5-bisphosphate)-binding site is contributed by Arg-6924. Arg-6929 serves as a coordination point for a 1,2-diacyl-sn-glycero-3-phospho-(1D-myo-inositol-3,4-bisphosphate). Ig-like domains are found at residues 6963–7046 (PEFE…GNAS) and 7057–7147 (PRFV…GELY). 2 cysteine pairs are disulfide-bonded: Cys-6984–Cys-7036 and Cys-7078–Cys-7131. The disordered stretch occupies residues 7200–7257 (ALGPSPGDLPNTRQSEPPAFEEAASQIPGAASGTPEVSQPGTHKGLEQETTSSGSQGW). The span at 7247 to 7257 (QETTSSGSQGW) shows a compositional bias: polar residues. An Ig-like 54 domain is found at 7306–7394 (PSMQVTIEDV…GQVLCKAELL (89 aa)). One can recognise a Protein kinase 1 domain in the interval 7416–7669 (YDVQEEIGRG…TSQCLAHPWF (254 aa)). Residues 7422 to 7430 (IGRGVFGFV) and Lys-7445 contribute to the ATP site. Asp-7535 acts as the Proton acceptor in catalysis. 3 disordered regions span residues 7717 to 7810 (GPPD…SPGC), 7879 to 8106 (EQAS…TTRK), and 8150 to 8180 (SSEE…VPLR). Residue Ser-7779 is modified to Phosphoserine. The segment covering 7793–7804 (AAVPASPQSAGP) has biased composition (low complexity). Residues 7941-7952 (TTAKDRGHKEGF) are compositionally biased toward basic and acidic residues. The span at 7986 to 7996 (SCHSELGSGSQ) shows a compositional bias: polar residues. Composition is skewed to low complexity over residues 8000–8014 (GPPS…PPQS) and 8053–8073 (GSLS…ASQV). Residue Ser-8161 is modified to Phosphoserine. One can recognise an Ig-like 55 domain in the interval 8380-8464 (KGRDQELSDE…VSNPLGTAVT (85 aa)). A disulfide bridge links Cys-8401 with Cys-8453. The Fibronectin type-III 3 domain occupies 8474–8566 (PSSSPRPEVG…PSEQVLLGGP (93 aa)). The Protein kinase 2 domain maps to 8590-8842 (FAFQMQIRRG…ASTCLQCGWL (253 aa)). ATP contacts are provided by residues 8596–8604 (IRRGRFSVV) and Lys-8619. Asp-8709 acts as the Proton acceptor in catalysis.

Belongs to the protein kinase superfamily. CAMK Ser/Thr protein kinase family. As to quaternary structure, interacts (via protein kinase domain 1) with CDH2 and (via protein kinase domain 1) with ATP1B1. Isoform 2 is found in a complex with DSG2, DESM, GJA1, CDH2 and VCL. Isoform 3 is found in a complex with DSG2, DESM, GJA1, CDH2, ANK3 and VCL. It depends on Mg(2+) as a cofactor. Post-translationally, autophosphorylated by protein kinase domain 1 and 2. In terms of processing, two small isoforms, one probably containing protein kinase domain 2 and a partial protein kinase domain 1 and one containing only protein kinase domain 2, are glycosylated. Expressed in skeletal muscles including flexor digitorum brevis (FDB), soleus and tibialis anterior muscles, and to a lesser extent in heart muscles (at protein level). Isoform 2 and isoform 3 are expressed in the myocardium (at protein level).

The protein resides in the cytoplasm. Its subcellular location is the myofibril. The protein localises to the sarcomere. It localises to the m line. It is found in the z line. The protein resides in the cell membrane. Its subcellular location is the sarcolemma. The protein localises to the nucleus. It localises to the secreted. It catalyses the reaction L-seryl-[protein] + ATP = O-phospho-L-seryl-[protein] + ADP + H(+). It carries out the reaction L-threonyl-[protein] + ATP = O-phospho-L-threonyl-[protein] + ADP + H(+). In terms of biological role, structural component of striated muscles which plays a role in myofibrillogenesis. Probably involved in the assembly of myosin into sarcomeric A bands in striated muscle. Has serine/threonine protein kinase activity and phosphorylates N-cadherin CDH2 and sodium/potassium-transporting ATPase subunit ATP1B1. Binds (via the PH domain) strongly to phosphatidylinositol 3,4-bisphosphate (PtdIns(3,4)P2) and phosphatidylinositol 4,5-bisphosphate (PtdIns(4,5)P2), and to a lesser extent to phosphatidylinositol 3-phosphate (PtdIns(3)P), phosphatidylinositol 4-phosphate (PtdIns(4)P), phosphatidylinositol 5-phosphate (PtdIns(5)P) and phosphatidylinositol 3,4,5-trisphosphate (PtdIns(3,4,5)P3). Its function is as follows. Isoform 2 and isoform 3: bind phosphatidylinositol bisphosphates (PIP2s) via their PH domains and negatively regulate the PI3K/AKT/mTOR signaling pathway, thus contributing to the regulation of cardiomyocyte size and adhesion. The sequence is that of Obscurin from Mus musculus (Mouse).